Here is a 377-residue protein sequence, read N- to C-terminus: PqqA peptide cyclase (377 aa).

Positions 12 to 228 (FGIPLAVLLE…EAARERLKGQ (217 aa)) constitute a Radical SAM core domain. Residues Cys-26, Cys-30, and Cys-33 each contribute to the [4Fe-4S] cluster site.

Belongs to the radical SAM superfamily. PqqE family. Interacts with PqqD. The interaction is necessary for activity of PqqE. [4Fe-4S] cluster is required as a cofactor.

The catalysed reaction is [PQQ precursor protein] + S-adenosyl-L-methionine = E-Y cross-linked-[PQQ precursor protein] + 5'-deoxyadenosine + L-methionine + H(+). The protein operates within cofactor biosynthesis; pyrroloquinoline quinone biosynthesis. Functionally, catalyzes the cross-linking of a glutamate residue and a tyrosine residue in the PqqA protein as part of the biosynthesis of pyrroloquinoline quinone (PQQ). This Rhodopseudomonas palustris (strain ATCC BAA-98 / CGA009) protein is PqqA peptide cyclase.